The sequence spans 508 residues: Erythropoietin receptor (508 aa).

An N-terminal signal peptide occupies residues M1 to W24. The Extracellular portion of the chain corresponds to A25–P250. A disulfide bridge links C52 with C62. A glycan (N-linked (GlcNAc...) asparagine) is linked at N76. A disulfide bridge links C91 with C107. One can recognise a Fibronectin type-III domain in the interval P148–D247. A glycan (N-linked (GlcNAc...) asparagine) is linked at N184. A WSXWS motif motif is present at residues W233–S237. Residues L251–S273 traverse the membrane as a helical segment. Over H274–S508 the chain is Cytoplasmic. A Glycyl lysine isopeptide (Lys-Gly) (interchain with G-Cter in ubiquitin) cross-link involves residue K281. The Box 1 motif signature appears at I282–E290. Y368 and Y426 each carry phosphotyrosine; by JAK2. The short motif at I452–L457 is the ITIM motif element. A Glycyl lysine isopeptide (Lys-Gly) (interchain with G-Cter in ubiquitin) cross-link involves residue K453. Y454, Y456, Y468, Y489, and Y504 each carry phosphotyrosine; by JAK2. The interval D467–S508 is disordered.

It belongs to the type I cytokine receptor family. Type 1 subfamily. As to quaternary structure, forms homodimers on EPO stimulation. The tyrosine-phosphorylated form interacts with several SH2 domain-containing proteins including LYN, the adapter protein SH2B2, PTPN6, PTPN11, JAK2, PI3 kinases, STAT5A/B, SOCS3, CRKL. Interacts with INPP5D/SHIP1. SH2B2 binding inhibits the JAK-STAT signaling. Interacts with RHEX; this interaction occurs in a erythropoietin (EPO)-dependent manner. Interacts with ATXN2L. Post-translationally, on EPO stimulation, phosphorylated on C-terminal tyrosine residues by JAK2. The phosphotyrosine motifs are also recruitment sites for several SH2-containing proteins and adapter proteins which mediate cell proliferation. Phosphorylation on Tyr-454 is required for PTPN6 interaction, Tyr-426 for PTPN11. Tyr-426 is also required for SOCS3 binding, but Tyr-454/Tyr-456 motif is the preferred binding site. Ubiquitinated by the ECS(SOCS2) complex following ligand-binding and phosphorylation by JAK2, leading to its degradation by the proteasome. Regulation by the ECS(SOCS2) complex acts as a negative feedback loop of erythropoietin-mediated signaling pathway. Ubiquitination at Lys-281 mediates receptor internalization, whereas ubiquitination at Lys-453 promotes trafficking of activated receptors to the lysosomes for degradation. Ubiquitinated by NOSIP; appears to be either multi-monoubiquitinated or polyubiquitinated. Ubiquitination mediates proliferation and survival of EPO-dependent cells.

The protein resides in the cell membrane. Its function is as follows. Receptor for erythropoietin, which mediates erythropoietin-induced erythroblast proliferation and differentiation. Upon EPO stimulation, EPOR dimerizes triggering the JAK2/STAT5 signaling cascade. In some cell types, can also activate STAT1 and STAT3. May also activate the LYN tyrosine kinase. In terms of biological role, isoform EPOR-T acts as a dominant-negative receptor of EPOR-mediated signaling. In Canis lupus familiaris (Dog), this protein is Erythropoietin receptor (EPOR).